The sequence spans 432 residues: Asparagine--tRNA ligase (432 aa).

The protein belongs to the class-II aminoacyl-tRNA synthetase family. As to quaternary structure, homodimer.

The protein localises to the cytoplasm. The catalysed reaction is tRNA(Asn) + L-asparagine + ATP = L-asparaginyl-tRNA(Asn) + AMP + diphosphate + H(+). The polypeptide is Asparagine--tRNA ligase (Limosilactobacillus reuteri (strain DSM 20016) (Lactobacillus reuteri)).